Reading from the N-terminus, the 309-residue chain is UDP-N-acetylenolpyruvoylglucosamine reductase (309 aa).

The 163-residue stretch at 33–195 (VGGQAETLFR…VRARLRTRPG (163 aa)) folds into the FAD-binding PCMH-type domain. The active site involves Arg175. The active-site Proton donor is Ser224. Glu294 is an active-site residue.

The protein belongs to the MurB family. The cofactor is FAD.

Its subcellular location is the cytoplasm. The catalysed reaction is UDP-N-acetyl-alpha-D-muramate + NADP(+) = UDP-N-acetyl-3-O-(1-carboxyvinyl)-alpha-D-glucosamine + NADPH + H(+). Its pathway is cell wall biogenesis; peptidoglycan biosynthesis. Its function is as follows. Cell wall formation. This chain is UDP-N-acetylenolpyruvoylglucosamine reductase, found in Granulibacter bethesdensis (strain ATCC BAA-1260 / CGDNIH1).